Reading from the N-terminus, the 400-residue chain is MQPTTEPHNAILVEKTPLETYVPPAKPSLIGLSRNELADRLGEIGVAPAQRKMRVQQLWHWMYFRGAQNFDEMTSISKGIRAELAQHFTVDRPEVVAEQISNDGTRKWLLRLPSGDNVEKAHEVECVYIPETDRGTLCVSSQVGCTLNCSFCHTGTQRLVRNLTAGEIVGQVMVARDRLNDWADREDGTRRVTNIVMMGMGEPLYNFDAVRDALLIVGDNEGIGISRRRITLSTSGVVPNIVRAGEEIGVMLAISLHAVRDELRNELVPLNRKYPIKELLQACRDYPGASNARRITFEYVMLKGVNDSLDDAKLLVKLLKGIHAKINLIPFNPWPGTAYECSDWDQIEKFSEYIFNAGYSSPVRTPRGRDILAACGQLKSETEKLSARERQTLRAMAMTD.

Glu-125 (proton acceptor) is an active-site residue. One can recognise a Radical SAM core domain in the interval 131–372 (ETDRGTLCVS…VRTPRGRDIL (242 aa)). An intrachain disulfide couples Cys-138 to Cys-375. The [4Fe-4S] cluster site is built by Cys-145, Cys-149, and Cys-152. S-adenosyl-L-methionine-binding positions include 201-202 (GE), Ser-233, 255-257 (SLH), and Asn-332. The active-site S-methylcysteine intermediate is Cys-375.

It belongs to the radical SAM superfamily. RlmN family. Requires [4Fe-4S] cluster as cofactor.

Its subcellular location is the cytoplasm. It catalyses the reaction adenosine(2503) in 23S rRNA + 2 reduced [2Fe-2S]-[ferredoxin] + 2 S-adenosyl-L-methionine = 2-methyladenosine(2503) in 23S rRNA + 5'-deoxyadenosine + L-methionine + 2 oxidized [2Fe-2S]-[ferredoxin] + S-adenosyl-L-homocysteine. The enzyme catalyses adenosine(37) in tRNA + 2 reduced [2Fe-2S]-[ferredoxin] + 2 S-adenosyl-L-methionine = 2-methyladenosine(37) in tRNA + 5'-deoxyadenosine + L-methionine + 2 oxidized [2Fe-2S]-[ferredoxin] + S-adenosyl-L-homocysteine. Specifically methylates position 2 of adenine 2503 in 23S rRNA and position 2 of adenine 37 in tRNAs. m2A2503 modification seems to play a crucial role in the proofreading step occurring at the peptidyl transferase center and thus would serve to optimize ribosomal fidelity. In Bradyrhizobium diazoefficiens (strain JCM 10833 / BCRC 13528 / IAM 13628 / NBRC 14792 / USDA 110), this protein is Dual-specificity RNA methyltransferase RlmN.